Consider the following 117-residue polypeptide: MTRAKSGKISKKRHKKILKLAKGYRGRANSCFRVAIEKVEKALLYAYRDRRNRKRDFRGLWIQRINAAVREHGLIYSQFMGALKKAGINIDRKVLAELAVNNNDGFTSIVQQSKAYI.

The protein belongs to the bacterial ribosomal protein bL20 family.

Its function is as follows. Binds directly to 23S ribosomal RNA and is necessary for the in vitro assembly process of the 50S ribosomal subunit. It is not involved in the protein synthesizing functions of that subunit. The sequence is that of Large ribosomal subunit protein bL20 from Rickettsia typhi (strain ATCC VR-144 / Wilmington).